A 308-amino-acid polypeptide reads, in one-letter code: NAD kinase (308 aa).

Catalysis depends on Asp-86, which acts as the Proton acceptor. NAD(+) contacts are provided by residues 86–87 (DG), Arg-91, 160–161 (NE), Asp-190, and 201–206 (TAYAFS).

This sequence belongs to the NAD kinase family. It depends on a divalent metal cation as a cofactor.

Its subcellular location is the cytoplasm. The catalysed reaction is NAD(+) + ATP = ADP + NADP(+) + H(+). Functionally, involved in the regulation of the intracellular balance of NAD and NADP, and is a key enzyme in the biosynthesis of NADP. Catalyzes specifically the phosphorylation on 2'-hydroxyl of the adenosine moiety of NAD to yield NADP. This Mycolicibacterium paratuberculosis (strain ATCC BAA-968 / K-10) (Mycobacterium paratuberculosis) protein is NAD kinase.